Reading from the N-terminus, the 327-residue chain is GTP 3',8-cyclase (327 aa).

A Radical SAM core domain is found at 7-232 (HHDRQFRYLR…IKRDRTAGPA (226 aa)). Arg16 serves as a coordination point for GTP. Residues Cys23 and Cys27 each coordinate [4Fe-4S] cluster. Tyr29 is an S-adenosyl-L-methionine binding site. [4Fe-4S] cluster is bound at residue Cys30. Arg66 is a binding site for GTP. Position 70 (Gly70) interacts with S-adenosyl-L-methionine. Position 97 (Thr97) interacts with GTP. Ser121 is an S-adenosyl-L-methionine binding site. Lys158 provides a ligand contact to GTP. Position 192 (Met192) interacts with S-adenosyl-L-methionine. Residues Cys255 and Cys258 each coordinate [4Fe-4S] cluster. Residue 260-262 (RLR) participates in GTP binding. Residue Cys272 coordinates [4Fe-4S] cluster.

The protein belongs to the radical SAM superfamily. MoaA family. As to quaternary structure, monomer and homodimer. Requires [4Fe-4S] cluster as cofactor.

It catalyses the reaction GTP + AH2 + S-adenosyl-L-methionine = (8S)-3',8-cyclo-7,8-dihydroguanosine 5'-triphosphate + 5'-deoxyadenosine + L-methionine + A + H(+). It functions in the pathway cofactor biosynthesis; molybdopterin biosynthesis. In terms of biological role, catalyzes the cyclization of GTP to (8S)-3',8-cyclo-7,8-dihydroguanosine 5'-triphosphate. The sequence is that of GTP 3',8-cyclase from Synechococcus elongatus (strain ATCC 33912 / PCC 7942 / FACHB-805) (Anacystis nidulans R2).